The following is a 212-amino-acid chain: Pyridoxine/pyridoxamine 5'-phosphate oxidase (212 aa).

Substrate contacts are provided by residues 8–11 (RRNY) and Lys-66. FMN-binding positions include 61–66 (RIVLLK), 76–77 (FT), Arg-82, Lys-83, and Gln-105. Substrate-binding residues include Tyr-123, Arg-127, and Ser-131. Residues 140–141 (QS) and Trp-184 each bind FMN. 190–192 (RLH) is a binding site for substrate. An FMN-binding site is contributed by Arg-194.

The protein belongs to the pyridoxamine 5'-phosphate oxidase family. Homodimer. FMN serves as cofactor.

It carries out the reaction pyridoxamine 5'-phosphate + O2 + H2O = pyridoxal 5'-phosphate + H2O2 + NH4(+). The catalysed reaction is pyridoxine 5'-phosphate + O2 = pyridoxal 5'-phosphate + H2O2. Its pathway is cofactor metabolism; pyridoxal 5'-phosphate salvage; pyridoxal 5'-phosphate from pyridoxamine 5'-phosphate: step 1/1. It functions in the pathway cofactor metabolism; pyridoxal 5'-phosphate salvage; pyridoxal 5'-phosphate from pyridoxine 5'-phosphate: step 1/1. Catalyzes the oxidation of either pyridoxine 5'-phosphate (PNP) or pyridoxamine 5'-phosphate (PMP) into pyridoxal 5'-phosphate (PLP). The chain is Pyridoxine/pyridoxamine 5'-phosphate oxidase from Cupriavidus metallidurans (strain ATCC 43123 / DSM 2839 / NBRC 102507 / CH34) (Ralstonia metallidurans).